We begin with the raw amino-acid sequence, 324 residues long: IDS-like terpene synthase 1 (324 aa).

Mg(2+) contacts are provided by Asp77 and Asp81.

This sequence belongs to the FPP/GGPP synthase family. Requires Mg(2+) as cofactor.

It carries out the reaction (2E)-geranyl diphosphate = (E)-beta-ocimene + diphosphate. It catalyses the reaction (2E)-geranyl diphosphate + H2O = linalool + diphosphate. The enzyme catalyses (2E,6E)-farnesyl diphosphate = (3E,6E)-alpha-farnesene + diphosphate. The catalysed reaction is (2E,6E,10E)-geranylgeranyl diphosphate = (E,E,E)-alpha-springene + diphosphate. In terms of biological role, terpene synthase that shows monoterpene synthase activity and produces (E)-beta-ocimene as a major product and linalool as a minor product, using geranyl diphosphate (GPP) as substrate. Also shows sesquiterpene synthase activity as it is able to convert farnesyl diphosphate (FPP) into (E,E)-alpha-farnesene. Finally, TPS1 can convert geranylgeranyl diphosphate into (E,E,E)-alpha-springene. This chain is IDS-like terpene synthase 1, found in Melampsora larici-populina (strain 98AG31 / pathotype 3-4-7) (Poplar leaf rust fungus).